Here is a 404-residue protein sequence, read N- to C-terminus: S-adenosylmethionine synthase (404 aa).

His18 serves as a coordination point for ATP. Asp20 contacts Mg(2+). Residue Glu46 participates in K(+) binding. Positions 59 and 102 each coordinate L-methionine. The flexible loop stretch occupies residues 102 to 112 (QSPEIAQGVDH). ATP contacts are provided by residues 178–180 (DGK), 249–250 (KF), Asp258, 264–265 (RK), Ala281, and Lys285. Asp258 contributes to the L-methionine binding site. Position 289 (Lys289) interacts with L-methionine.

It belongs to the AdoMet synthase family. As to quaternary structure, homotetramer; dimer of dimers. It depends on Mg(2+) as a cofactor. K(+) is required as a cofactor.

It is found in the cytoplasm. The enzyme catalyses L-methionine + ATP + H2O = S-adenosyl-L-methionine + phosphate + diphosphate. The protein operates within amino-acid biosynthesis; S-adenosyl-L-methionine biosynthesis; S-adenosyl-L-methionine from L-methionine: step 1/1. In terms of biological role, catalyzes the formation of S-adenosylmethionine (AdoMet) from methionine and ATP. The overall synthetic reaction is composed of two sequential steps, AdoMet formation and the subsequent tripolyphosphate hydrolysis which occurs prior to release of AdoMet from the enzyme. This is S-adenosylmethionine synthase from Rhodococcus jostii (strain RHA1).